We begin with the raw amino-acid sequence, 212 residues long: Fucoxanthin-chlorophyll a-c binding protein E, chloroplastic (212 aa).

A chloroplast-targeting transit peptide spans 1–34 (MAIACAAAPGLRGAEPFNGAALATSAKSSSAMKM). Helical transmembrane passes span 76 to 96 (IAML…PGML), 117 to 137 (IPPL…LFVV), and 178 to 198 (GRAA…SNQP).

The protein belongs to the fucoxanthin chlorophyll protein family. The LHC complex of chromophytic algae is composed of fucoxanthin, chlorophyll A and C bound non-covalently by fucoxanthin chlorophyll proteins (FCPs). The ratio of pigments in this LHC is; fucoxanthin: chlorophyll C: chlorophyll A; (0.6-1): (0.1-0.3): (1).

The protein localises to the plastid. Its subcellular location is the chloroplast thylakoid membrane. The light-harvesting complex (LHC) functions as a light receptor, it captures and delivers excitation energy to photosystems with which it is closely associated. Energy is transferred from the carotenoid and chlorophyll C (or B) to chlorophyll A and the photosynthetic reaction centers where it is used to synthesize ATP and reducing power. In Macrocystis pyrifera (Giant kelp), this protein is Fucoxanthin-chlorophyll a-c binding protein E, chloroplastic (FCPE).